The primary structure comprises 332 residues: Fructose-1,6-bisphosphatase class 1 (332 aa).

Mg(2+)-binding residues include E89, D110, L112, and D113. Substrate-binding positions include 113–116, N206, Y239, 257–259, and K269; these read DGSS and YLY. E275 lines the Mg(2+) pocket.

Belongs to the FBPase class 1 family. Homotetramer. It depends on Mg(2+) as a cofactor.

It localises to the cytoplasm. The catalysed reaction is beta-D-fructose 1,6-bisphosphate + H2O = beta-D-fructose 6-phosphate + phosphate. Its pathway is carbohydrate biosynthesis; gluconeogenesis. The polypeptide is Fructose-1,6-bisphosphatase class 1 (Klebsiella pneumoniae (strain 342)).